Here is a 458-residue protein sequence, read N- to C-terminus: RuvB-like helicase 1 (458 aa).

The segment at 1-29 (MVQISEVKGNSRDNRTAAHTHIKGLGLRP) is disordered. 71–78 (GGPGTGKT) is an ATP binding site.

Belongs to the RuvB family. In terms of assembly, may form heterododecamers with RVB2. Component of the SWR1 chromatin remodeling complex, the INO80 chromatin remodeling complex, and of the R2TP complex.

It is found in the nucleus. The enzyme catalyses ATP + H2O = ADP + phosphate + H(+). DNA helicase which participates in several chromatin remodeling complexes, including the SWR1 and the INO80 complexes. The SWR1 complex mediates the ATP-dependent exchange of histone H2A for the H2A variant HZT1 leading to transcriptional regulation of selected genes by chromatin remodeling. The INO80 complex remodels chromatin by shifting nucleosomes and is involved in DNA repair. Also involved in pre-rRNA processing. This is RuvB-like helicase 1 (rvb1) from Emericella nidulans (strain FGSC A4 / ATCC 38163 / CBS 112.46 / NRRL 194 / M139) (Aspergillus nidulans).